Reading from the N-terminus, the 479-residue chain is MSPQTETKASVGFKAGVKEYKLTYYTPEYETKDTDILAAFRVTPQPGVPPEEAGAAVAAESSTGTWTTVWTDGLTSLDRYKGRCYHIEPVPGEETQFIAYVAYPLDLFEEGSVTNMFTSIVGNVFGFKALAALRLEDLRIPPAYTKTFQGPPHGIQVERDKLNKYGRPLLGCTIKPKLGLSAKNYGRAVYECLRGGLDFTKDDENVNSQPFMRWRDRFLFCAEAIYKSQAETGEIKGHYLNATAGTCEEMIKRAVFARELGVPIVMHDYLTGGFTANTSLSHYCRDNGLLLHIHRAMHAVIDRQKNHGMHFRVLAKALRLSGGDHIHAGTVVGKLEGDRESTLGFVDLLRDDYVEKDRSRGIFFTQDWVSLPGVLPVASGGIHVWHMPALTEIFGDDSVLQFGGGTLGHPWGNAPGAVANRVALEACVQARNEGRDLAVEGNEIIREACKWSPELAAACEVWKEIRFNFPTIDKLDGQE.

Positions 1-2 (MS) are excised as a propeptide. Substrate is bound by residues Asn-123 and Thr-173. The Proton acceptor role is filled by Lys-175. A substrate-binding site is contributed by Lys-177. Residues Lys-201, Asp-203, and Glu-204 each coordinate Mg(2+). The residue at position 201 (Lys-201) is an N6-carboxylysine. Phosphoserine is present on Ser-208. His-294 acts as the Proton acceptor in catalysis. Residues Arg-295 and His-327 each contribute to the substrate site. Residue Thr-330 is modified to Phosphothreonine. Substrate is bound at residue Ser-379.

Belongs to the RuBisCO large chain family. Type I subfamily. Heterohexadecamer of 8 large chains and 8 small chains; disulfide-linked. The disulfide link is formed within the large subunit homodimers. Requires Mg(2+) as cofactor. In terms of processing, the disulfide bond which can form in the large chain dimeric partners within the hexadecamer appears to be associated with oxidative stress and protein turnover.

The protein localises to the plastid. It localises to the chloroplast. The enzyme catalyses 2 (2R)-3-phosphoglycerate + 2 H(+) = D-ribulose 1,5-bisphosphate + CO2 + H2O. It catalyses the reaction D-ribulose 1,5-bisphosphate + O2 = 2-phosphoglycolate + (2R)-3-phosphoglycerate + 2 H(+). RuBisCO catalyzes two reactions: the carboxylation of D-ribulose 1,5-bisphosphate, the primary event in carbon dioxide fixation, as well as the oxidative fragmentation of the pentose substrate in the photorespiration process. Both reactions occur simultaneously and in competition at the same active site. In Capsella bursa-pastoris (Shepherd's purse), this protein is Ribulose bisphosphate carboxylase large chain.